The sequence spans 447 residues: Ameloblastin (447 aa).

Positions 1–26 (MSASKIPLFKMKDLILILCLLEMSFA) are cleaved as a signal peptide. Hydroxyproline is present on Pro-37. Ser-43 is modified (phosphoserine). The O-linked (GalNAc...) serine glycan is linked to Ser-112. 3 disordered regions span residues 165 to 211 (QQVA…DFAD), 307 to 338 (DSPVAATKGPENEEGGAQGSPMPEANPDNLEN), and 353 to 383 (LLALPKDDIPGLPRSPSGKMKGLPSVTPAAA). 2 tandem repeats follow at residues 189 to 201 (PSLPGMDFPDPQG) and 202 to 214 (PSLPGLDFADPQG).

This sequence belongs to the ameloblastin family. Ameloblast-specific. Located at the Tomes processes of secretory ameloblasts and in the sheath space between rod-interrod enamel.

It localises to the secreted. Its subcellular location is the extracellular space. The protein localises to the extracellular matrix. Functionally, involved in the mineralization and structural organization of enamel. In Homo sapiens (Human), this protein is Ameloblastin (AMBN).